Consider the following 288-residue polypeptide: Diaminopimelate epimerase (288 aa).

Asn14 and Asn67 together coordinate substrate. Residue Cys76 is the Proton donor of the active site. Residues 77 to 78 (GN), Asn166, Asn199, and 217 to 218 (ER) each bind substrate. Cys226 serves as the catalytic Proton acceptor. 227-228 (GT) provides a ligand contact to substrate.

Belongs to the diaminopimelate epimerase family. Homodimer.

The protein localises to the cytoplasm. It carries out the reaction (2S,6S)-2,6-diaminopimelate = meso-2,6-diaminopimelate. Its pathway is amino-acid biosynthesis; L-lysine biosynthesis via DAP pathway; DL-2,6-diaminopimelate from LL-2,6-diaminopimelate: step 1/1. In terms of biological role, catalyzes the stereoinversion of LL-2,6-diaminopimelate (L,L-DAP) to meso-diaminopimelate (meso-DAP), a precursor of L-lysine and an essential component of the bacterial peptidoglycan. This is Diaminopimelate epimerase from Bacillus mycoides (strain KBAB4) (Bacillus weihenstephanensis).